The sequence spans 41 residues: MKIRNSLRSLRNRHRDNRLVRRKGRVYIINKTNRRFKARQG.

Belongs to the bacterial ribosomal protein bL36 family.

The polypeptide is Large ribosomal subunit protein bL36 (Parvibaculum lavamentivorans (strain DS-1 / DSM 13023 / NCIMB 13966)).